A 305-amino-acid polypeptide reads, in one-letter code: Undecaprenyl-diphosphatase (305 aa).

The next 8 membrane-spanning stretches (helical) occupy residues 18-38, 55-75, 103-123, 130-150, 187-207, 225-245, 246-266, and 284-304; these read GVTELFPVSSLGHAVLVPALV, YLAFIVGLHVATAAALLVFFW, WLIVVGTIPVGLAGLALEQLF, PVPAAAFLLLNSVALYAGEVL, GVLIGAAQILALLPGISRSGI, FSFLLATPIILAAGVYKIPEL, FGPLGAGIGGQVLAGSIASFV, and LTPFAIYCAVAGGASLVWLAL.

This sequence belongs to the UppP family.

It is found in the cell membrane. The enzyme catalyses di-trans,octa-cis-undecaprenyl diphosphate + H2O = di-trans,octa-cis-undecaprenyl phosphate + phosphate + H(+). Functionally, catalyzes the dephosphorylation of undecaprenyl diphosphate (UPP). Confers resistance to bacitracin. This Mycobacterium avium (strain 104) protein is Undecaprenyl-diphosphatase.